Here is a 378-residue protein sequence, read N- to C-terminus: Ribosomal RNA large subunit methyltransferase G (378 aa).

The protein belongs to the methyltransferase superfamily. RlmG family.

The protein resides in the cytoplasm. It carries out the reaction guanosine(1835) in 23S rRNA + S-adenosyl-L-methionine = N(2)-methylguanosine(1835) in 23S rRNA + S-adenosyl-L-homocysteine + H(+). Specifically methylates the guanine in position 1835 (m2G1835) of 23S rRNA. The polypeptide is Ribosomal RNA large subunit methyltransferase G (Salmonella heidelberg (strain SL476)).